The primary structure comprises 400 residues: Serine/threonine transporter SstT (400 aa).

Helical transmembrane passes span 14 to 34, 48 to 68, 76 to 96, 136 to 156, 177 to 197, 211 to 231, 285 to 305, 311 to 331, and 349 to 371; these read IIIA…VTPY, SVAP…FQVG, VLLL…IASL, AISE…GLAM, IIHK…AVTF, LLVV…PILV, IPLG…VLTL, LGIH…TISA, and CSLF…IISV.

This sequence belongs to the dicarboxylate/amino acid:cation symporter (DAACS) (TC 2.A.23) family.

It localises to the cell inner membrane. The enzyme catalyses L-serine(in) + Na(+)(in) = L-serine(out) + Na(+)(out). It catalyses the reaction L-threonine(in) + Na(+)(in) = L-threonine(out) + Na(+)(out). Involved in the import of serine and threonine into the cell, with the concomitant import of sodium (symport system). The protein is Serine/threonine transporter SstT of Acinetobacter baumannii (strain AB307-0294).